The primary structure comprises 208 residues: MMHSRSELLDQFLRQQGILNEDILLAIRQLPRERFVPEALAHQAYQNNALPIGEGQTISQPYIVAKMTELLELQYDSNLLEIGTGSGYQTAVLAKLVGHVHSVERIKSLQWNAKRLLKLLDLYNISTKHADGWNGWPSKSPFDAIIVTAAAESIPNDLLYQLKEGGRLVIPIGTESQQLLRITRHGDEFHSEVIEEVRFVPLVSGDLA.

Ser59 is a catalytic residue.

The protein belongs to the methyltransferase superfamily. L-isoaspartyl/D-aspartyl protein methyltransferase family.

It localises to the cytoplasm. The catalysed reaction is [protein]-L-isoaspartate + S-adenosyl-L-methionine = [protein]-L-isoaspartate alpha-methyl ester + S-adenosyl-L-homocysteine. Its function is as follows. Catalyzes the methyl esterification of L-isoaspartyl residues in peptides and proteins that result from spontaneous decomposition of normal L-aspartyl and L-asparaginyl residues. It plays a role in the repair and/or degradation of damaged proteins. The polypeptide is Protein-L-isoaspartate O-methyltransferase (Aliivibrio salmonicida (strain LFI1238) (Vibrio salmonicida (strain LFI1238))).